The chain runs to 686 residues: 3',5'-cyclic-AMP phosphodiesterase 4C (686 aa).

S9, S28, S40, and S83 each carry phosphoserine. Disordered regions lie at residues 88-116 and 124-143; these read NGLP…VHHV and YRSD…TSSA. The segment covering 124–133 has biased composition (basic and acidic residues); that stretch reads YRSDSDHEPS. The 330-residue stretch at 313 to 642 folds into the PDEase domain; it reads VQTDQEEQLA…EWYQSRIPCS (330 aa). H389 functions as the Proton donor in the catalytic mechanism. H389 contacts 3',5'-cyclic AMP. Positions 389 and 393 each coordinate AMP. Positions 393, 429, 430, and 547 each coordinate Zn(2+). AMP contacts are provided by D430, D547, Q598, and F601. Mg(2+) is bound at residue D430. D430 is a Mn(2+) binding site. The 3',5'-cyclic AMP site is built by Q598 and F601. S642 is subject to Phosphoserine. Acidic residues predominate over residues 660 to 671; that stretch reads EAEEEEEEEDEG. A disordered region spans residues 660 to 686; it reads EAEEEEEEEDEGQCTALNRESSELPST. Residues 674–686 are compositionally biased toward polar residues; the sequence is TALNRESSELPST.

The protein belongs to the cyclic nucleotide phosphodiesterase family. PDE4 subfamily. As to quaternary structure, part of a complex containing AKAP5, ADCY5, ADCY6 and PKD2. The cofactor is Zn(2+). It depends on Mg(2+) as a cofactor. Requires Mn(2+) as cofactor.

Its subcellular location is the cell projection. The protein localises to the cilium. It catalyses the reaction 3',5'-cyclic AMP + H2O = AMP + H(+). It participates in purine metabolism; 3',5'-cyclic AMP degradation; AMP from 3',5'-cyclic AMP: step 1/1. In terms of biological role, hydrolyzes the second messenger cAMP, which is a key regulator of many important physiological processes. The protein is 3',5'-cyclic-AMP phosphodiesterase 4C of Mus musculus (Mouse).